The primary structure comprises 242 residues: Arginine transport ATP-binding protein ArtP (242 aa).

Positions 3–241 (IQLNGINCFY…QTEAFKNYLS (239 aa)) constitute an ABC transporter domain. 35–42 (GPSGAGKS) is a binding site for ATP.

Belongs to the ABC transporter superfamily. As to quaternary structure, the complex is composed of two ATP-binding proteins (ArtP), two transmembrane proteins (ArtM and ArtQ) and two solute-binding proteins (ArtJ and ArtI).

Its subcellular location is the cell inner membrane. It catalyses the reaction a polar amino acid(out) + ATP + H2O = a polar amino acid(in) + ADP + phosphate + H(+). It carries out the reaction L-arginine(out) + ATP + H2O = L-arginine(in) + ADP + phosphate + H(+). Part of the ABC transporter complex ArtPIQMJ involved in arginine transport. Probably responsible for energy coupling to the transport system. In Escherichia coli O157:H7, this protein is Arginine transport ATP-binding protein ArtP (artP).